We begin with the raw amino-acid sequence, 512 residues long: ATP synthase subunit alpha (512 aa).

Residue 169–176 (GDRQTGKT) coordinates ATP.

Belongs to the ATPase alpha/beta chains family. F-type ATPases have 2 components, CF(1) - the catalytic core - and CF(0) - the membrane proton channel. CF(1) has five subunits: alpha(3), beta(3), gamma(1), delta(1), epsilon(1). CF(0) has three main subunits: a(1), b(2) and c(9-12). The alpha and beta chains form an alternating ring which encloses part of the gamma chain. CF(1) is attached to CF(0) by a central stalk formed by the gamma and epsilon chains, while a peripheral stalk is formed by the delta and b chains.

It is found in the cell inner membrane. It carries out the reaction ATP + H2O + 4 H(+)(in) = ADP + phosphate + 5 H(+)(out). Produces ATP from ADP in the presence of a proton gradient across the membrane. The alpha chain is a regulatory subunit. The sequence is that of ATP synthase subunit alpha from Aromatoleum aromaticum (strain DSM 19018 / LMG 30748 / EbN1) (Azoarcus sp. (strain EbN1)).